Here is a 160-residue protein sequence, read N- to C-terminus: Cytochrome b6-f complex subunit 4 (160 aa).

The next 3 helical transmembrane spans lie at 36-56 (LLYIFPVVILGSIACCGGLAV), 95-115 (LLGVVLMAAVPAGLIAVPFIE), and 131-151 (AVFLFGTFVAIWLGIGATFPI).

Belongs to the cytochrome b family. PetD subfamily. In terms of assembly, the 4 large subunits of the cytochrome b6-f complex are cytochrome b6, subunit IV (17 kDa polypeptide, petD), cytochrome f and the Rieske protein, while the 4 small subunits are petG, petL, petM and petN. The complex functions as a dimer.

The protein resides in the plastid. It localises to the cyanelle thylakoid membrane. Component of the cytochrome b6-f complex, which mediates electron transfer between photosystem II (PSII) and photosystem I (PSI), cyclic electron flow around PSI, and state transitions. This is Cytochrome b6-f complex subunit 4 from Cyanophora paradoxa.